We begin with the raw amino-acid sequence, 430 residues long: Sphingosine-1-phosphate phosphatase 1 (430 aa).

The interval 34-100 (GSPKAGEDAE…PRRAGSLRRN (67 aa)) is disordered. Serine 101 is modified (phosphoserine). Residue threonine 103 is modified to Phosphothreonine. Helical transmembrane passes span 121 to 141 (FCFGTELGNELFYIIFFPFWI), 152 to 172 (LVIIWVLVMYLGQCTKDIIRW), 193 to 213 (MPSTHAMSGTAIPIAMILLTY), and 216 to 236 (WQYPLIYGLILIPCWSSLVCL). A phosphatase sequence motif I region spans residues 167–175 (KDIIRWPRP). Residues 194 to 197 (PSTH) are phosphatase sequence motif II. Histidine 197 serves as the catalytic Proton donor. Positions 237 to 248 (SRIYMGMHSILD) are phosphatase sequence motif III. Residue histidine 244 is the Nucleophile of the active site. Transmembrane regions (helical) follow at residues 246–266 (ILDVIAGFLYTILILIIFYPL), 279–299 (YAPLIIIGLHLILGIFSFTLD), 311–331 (ILGSGAGIACGSHAAYNLGIS), 348–368 (VTLFGKAILRVVIGMLLVLFV), and 409–429 (YGTVGFSITFLIPYIFSFIGI).

The protein belongs to the type 2 lipid phosphate phosphatase family.

The protein resides in the endoplasmic reticulum membrane. It is found in the cell membrane. It carries out the reaction sphinganine 1-phosphate + H2O = sphinganine + phosphate. The enzyme catalyses sphing-4-enine 1-phosphate + H2O = sphing-4-enine + phosphate. In terms of biological role, specifically dephosphorylates sphingosine 1-phosphate (S1P), dihydro-S1P, and phyto-S1P. Does not act on ceramide 1-phosphate, lysophosphatidic acid or phosphatidic acid. Sphingosine-1-phosphate phosphatase activity is needed for efficient recycling of sphingosine into the sphingolipid synthesis pathway. Regulates the intracellular levels of the bioactive sphingolipid metabolite S1P that regulates diverse biological processes acting both as an extracellular receptor ligand or as an intracellular second messenger. Involved in efficient ceramide synthesis from exogenous sphingoid bases. Converts S1P to sphingosine, which is readily metabolized to ceramide via ceramide synthase. In concert with sphingosine kinase 2 (SphK2), recycles sphingosine into ceramide through a phosphorylation/dephosphorylation cycle. Regulates endoplasmic-to-Golgi trafficking of ceramides, resulting in the regulation of ceramide levels in the endoplasmic reticulum, preferentially long-chain ceramide species, and influences the anterograde membrane transport of both ceramide and proteins from the endoplasmic reticulum to the Golgi apparatus. The modulation of intracellular ceramide levels in turn regulates apoptosis. Via S1P levels, modulates resting tone, intracellular Ca(2+) and myogenic vasoconstriction in resistance arteries. Also involved in unfolded protein response (UPR) and ER stress-induced autophagy via regulation of intracellular S1P levels. Involved in the regulation of epidermal homeostasis and keratinocyte differentiation. The polypeptide is Sphingosine-1-phosphate phosphatase 1 (Rattus norvegicus (Rat)).